We begin with the raw amino-acid sequence, 156 residues long: MKLFILAVGHKMPGWIASGFDEYTKRMPPELRIELREIKPELRSGGRSAESVMAAERQKIEAALPKGARLVALDERGRDWTTMQLAQALPGWQQDGRDVAFVIGGADGLDPDLKARADVLLRISSMTLPHGMVRVLLAEQLYRAWSITQNHPYHRA.

Residues L73, G104, and 123-128 (ISSMTL) each bind S-adenosyl-L-methionine.

It belongs to the RNA methyltransferase RlmH family. As to quaternary structure, homodimer.

It localises to the cytoplasm. It carries out the reaction pseudouridine(1915) in 23S rRNA + S-adenosyl-L-methionine = N(3)-methylpseudouridine(1915) in 23S rRNA + S-adenosyl-L-homocysteine + H(+). Functionally, specifically methylates the pseudouridine at position 1915 (m3Psi1915) in 23S rRNA. This Burkholderia cenocepacia (strain HI2424) protein is Ribosomal RNA large subunit methyltransferase H.